A 57-amino-acid polypeptide reads, in one-letter code: VVFCDAGITCPSGTTCCRSPFGVWYCCPFLMGQCCRDGRHCCRHGYHCDSTSTLCLR.

2 disulfides stabilise this stretch: cysteine 4/cysteine 16 and cysteine 10/cysteine 26.

Belongs to the granulin family. Granulins are disulfide bridged. In terms of tissue distribution, ubiquitous.

It is found in the secreted. In terms of biological role, granulins have possible cytokine-like activity. They may play a role in inflammation, wound repair, and tissue remodeling. This is Granulin-3 from Cyprinus carpio (Common carp).